The following is a 714-amino-acid chain: Polyribonucleotide nucleotidyltransferase (714 aa).

D488 and D494 together coordinate Mg(2+). A KH domain is found at P555–I614. Residues G624–K692 enclose the S1 motif domain.

This sequence belongs to the polyribonucleotide nucleotidyltransferase family. Mg(2+) serves as cofactor.

It is found in the cytoplasm. It carries out the reaction RNA(n+1) + phosphate = RNA(n) + a ribonucleoside 5'-diphosphate. In terms of biological role, involved in mRNA degradation. Catalyzes the phosphorolysis of single-stranded polyribonucleotides processively in the 3'- to 5'-direction. In Brucella abortus biovar 1 (strain 9-941), this protein is Polyribonucleotide nucleotidyltransferase.